The following is a 380-amino-acid chain: Cytochrome b (380 aa).

4 helical membrane-spanning segments follow: residues F33–M53, W77–V98, W113–L133, and F178–L198. Residues H83 and H97 each coordinate heme b. Heme b-binding residues include H182 and H196. H201 contributes to the a ubiquinone binding site. The next 4 helical transmembrane spans lie at Y226–S246, L288–H308, P320–G340, and F347–P367.

The protein belongs to the cytochrome b family. The cytochrome bc1 complex contains 3 respiratory subunits (MT-CYB, CYC1 and UQCRFS1), 2 core proteins (UQCRC1 and UQCRC2) and probably 6 low-molecular weight proteins. It depends on heme b as a cofactor.

It localises to the mitochondrion inner membrane. Its function is as follows. Component of the ubiquinol-cytochrome c reductase complex (complex III or cytochrome b-c1 complex) that is part of the mitochondrial respiratory chain. The b-c1 complex mediates electron transfer from ubiquinol to cytochrome c. Contributes to the generation of a proton gradient across the mitochondrial membrane that is then used for ATP synthesis. In Acipenser sinensis (Chinese sturgeon), this protein is Cytochrome b (mt-cyb).